The following is a 234-amino-acid chain: Phosphoribosylaminoimidazole-succinocarboxamide synthase (234 aa).

This sequence belongs to the SAICAR synthetase family.

It catalyses the reaction 5-amino-1-(5-phospho-D-ribosyl)imidazole-4-carboxylate + L-aspartate + ATP = (2S)-2-[5-amino-1-(5-phospho-beta-D-ribosyl)imidazole-4-carboxamido]succinate + ADP + phosphate + 2 H(+). It participates in purine metabolism; IMP biosynthesis via de novo pathway; 5-amino-1-(5-phospho-D-ribosyl)imidazole-4-carboxamide from 5-amino-1-(5-phospho-D-ribosyl)imidazole-4-carboxylate: step 1/2. This chain is Phosphoribosylaminoimidazole-succinocarboxamide synthase, found in Staphylococcus carnosus (strain TM300).